Here is a 437-residue protein sequence, read N- to C-terminus: MHDIRVIRENPAAFDEGLAKRGLEPLSAELIALDDARKAAISAAQGAQERRNALSKEIGAAKKAKDEARAQDLMAEVARLKDEAPALEAAADAAAKALDARLAAIPNTPKAEVPLGRDEHDNVEYRRFEGRGRAEAGRQHFELGEATGLMDFEAAAKLSGARFVVLKGHLARLERALGQFMLDLHTTEHGYTEVAPPLLVRDEVMFGTAQLPKFRDDQFAAMPGSVEAEGGAPTRWLIPTAEVPLTNLVRESILSEDELPLRFTALTPCFRAEAGAAGRDTRGMLRQHQFTKVELVSVTTPEQSDEEHERMLASAEAVLKKLDLPYRVVTLCTGDMGFASQKTYDIEVWLPGQGTFREISSCSVCGDFQARRMDARFRRREGRGVAHVHTLNGSGVAVGRALIAVMENYQNPDGSVTVPSALVPYMGGITRIEGPHA.

Position 240–242 (240–242 (TAE)) interacts with L-serine. 271-273 (RAE) lines the ATP pocket. Residue glutamate 294 participates in L-serine binding. 358–361 (EISS) serves as a coordination point for ATP. Serine 394 is a binding site for L-serine.

It belongs to the class-II aminoacyl-tRNA synthetase family. Type-1 seryl-tRNA synthetase subfamily. Homodimer. The tRNA molecule binds across the dimer.

It is found in the cytoplasm. The catalysed reaction is tRNA(Ser) + L-serine + ATP = L-seryl-tRNA(Ser) + AMP + diphosphate + H(+). It carries out the reaction tRNA(Sec) + L-serine + ATP = L-seryl-tRNA(Sec) + AMP + diphosphate + H(+). Its pathway is aminoacyl-tRNA biosynthesis; selenocysteinyl-tRNA(Sec) biosynthesis; L-seryl-tRNA(Sec) from L-serine and tRNA(Sec): step 1/1. Catalyzes the attachment of serine to tRNA(Ser). Is also able to aminoacylate tRNA(Sec) with serine, to form the misacylated tRNA L-seryl-tRNA(Sec), which will be further converted into selenocysteinyl-tRNA(Sec). This Methylobacterium nodulans (strain LMG 21967 / CNCM I-2342 / ORS 2060) protein is Serine--tRNA ligase.